The following is a 1020-amino-acid chain: Vacuolar membrane protease (1020 aa).

Over 1–11 the chain is Cytoplasmic; the sequence is MKCHNPFGFRV. A helical transmembrane segment spans residues 12-32; it reads GPVTFWTIIIYLALLVPLLWI. The Vacuolar segment spans residues 33–410; it reads HETVPPAPSS…GFAVFGLRGL (378 aa). Residues Asn50, Asn94, and Asn130 are each glycosylated (N-linked (GlcNAc...) asparagine). His191 and Asp203 together coordinate Zn(2+). Glu237 functions as the Proton acceptor in the catalytic mechanism. Zn(2+) contacts are provided by Glu238, Glu263, and His336. A helical membrane pass occupies residues 411–431; it reads FAWSLTLLIVSPLILAILVFI. The Cytoplasmic segment spans residues 432-467; it reads LNRHDKLYFFSRKINVHNEGSEDPVSIGGFRGFTRF. The helical transmembrane segment at 468–488 threads the bilayer; the sequence is PIAVGFSGALTLASAFLLTKI. Over 489–491 the chain is Vacuolar; that stretch reads NPM. A helical transmembrane segment spans residues 492 to 512; sequence IVYSSEYAVWGMMLSLFYVSL. Topologically, residues 513–529 are cytoplasmic; it reads WMTLKGSSAVRPSALQR. The chain crosses the membrane as a helical span at residues 530-550; sequence GYIHIWLFIVSWGLLIVVAVT. Topologically, residues 551-561 are vacuolar; it reads EDRLKIASGYP. Residues 562 to 582 traverse the membrane as a helical segment; sequence VVFLHSALFLSTVISFLELFG. The Cytoplasmic segment spans residues 583-690; that stretch reads LTKKHDYARR…RLPGWTWILQ (108 aa). Residues 609–648 are disordered; it reads DDALIAPDTPNDEAEDSDGEDSEHEPTETTPLRAGGDSRV. Acidic residues predominate over residues 618–631; that stretch reads PNDEAEDSDGEDSE. The chain crosses the membrane as a helical span at residues 691-711; the sequence is FLLLAPINVILWGQIGLFAVA. At 712–724 the chain is on the vacuolar side; that stretch reads ATQAGGADGGSVL. Residues 725-745 form a helical membrane-spanning segment; sequence TTYLIIAVLSIVILVPLAPFI. Residues 746–750 are Cytoplasmic-facing; sequence HRVHY. Residues 751 to 771 traverse the membrane as a helical segment; that stretch reads YVPIILFAAFAGTLIYNLIAF. Topologically, residues 772-1020 are vacuolar; that stretch reads PFSANNRYKI…VGLVRPVKRF (249 aa). N-linked (GlcNAc...) asparagine glycosylation is found at Asn851, Asn868, and Asn873.

It belongs to the peptidase M28 family. Zn(2+) is required as a cofactor.

The protein resides in the vacuole membrane. Its function is as follows. May be involved in vacuolar sorting and osmoregulation. The chain is Vacuolar membrane protease from Verticillium alfalfae (strain VaMs.102 / ATCC MYA-4576 / FGSC 10136) (Verticillium wilt of alfalfa).